The sequence spans 424 residues: Histidinol dehydrogenase (424 aa).

3 residues coordinate NAD(+): Tyr-127, Gln-188, and Asn-211. Substrate is bound by residues Ser-234, Gln-256, and His-259. 2 residues coordinate Zn(2+): Gln-256 and His-259. Residues Glu-322 and His-323 each act as proton acceptor in the active site. Substrate contacts are provided by His-323, Asp-356, Glu-410, and His-415. Residue Asp-356 coordinates Zn(2+). A Zn(2+)-binding site is contributed by His-415.

The protein belongs to the histidinol dehydrogenase family. Requires Zn(2+) as cofactor.

It carries out the reaction L-histidinol + 2 NAD(+) + H2O = L-histidine + 2 NADH + 3 H(+). It functions in the pathway amino-acid biosynthesis; L-histidine biosynthesis; L-histidine from 5-phospho-alpha-D-ribose 1-diphosphate: step 9/9. Functionally, catalyzes the sequential NAD-dependent oxidations of L-histidinol to L-histidinaldehyde and then to L-histidine. The polypeptide is Histidinol dehydrogenase (Methanococcus maripaludis (strain DSM 14266 / JCM 13030 / NBRC 101832 / S2 / LL)).